Consider the following 28-residue polypeptide: M-poneritoxin-Dq4b/U1-poneritoxin-Dq4c/U1-poneritoxin-Dq4d (28 aa).

Position 20 is a methionine sulfoxide; in form U1-PONTX-Dq4d (M20). Alanine amide; in form Dq-1362 and U1-PONTX-Dq4d is present on A28.

Occurs in 3 forms, M-PONTX-Dq4b has an amidated Ala-28, U1-PONTX-Dq4d has an amidated Ala-28 and an oxidized Met-20, U1-PONTX-Dq4c has no modifications at either Met-20 or Ala-28. In terms of tissue distribution, expressed by the venom gland.

The protein localises to the secreted. Functionally, M-poneritoxin-Dq4b: this synthetic peptide has antimicrobial activity against Gram-positive bacteria B.amyloliquefacies S499 (MIC=0.1 mM), L.monocytogenes 2231 and S.aureus ATCC 29213, against Gram-negative bacteria P.putida BTP1, P.aeruginosa PaO1 and E.coli ATCC 10536, and against the fungi S.cerevisiae, R.mucilaginosa and C.cucumerinum. Not active against the fungi F.oxysporum and B.cinerea. The polypeptide is M-poneritoxin-Dq4b/U1-poneritoxin-Dq4c/U1-poneritoxin-Dq4d (Dinoponera quadriceps (South American ant)).